Here is a 226-residue protein sequence, read N- to C-terminus: Cytochrome c-553I (226 aa).

An N-terminal signal peptide occupies residues 1 to 22; sequence MTSKTTASLLAICVACAASAIA. The tract at residues 43–68 is disordered; it reads AAVSGDAHEQPAAEAPAEEEEETPAV. Heme contacts are provided by Cys-125, Cys-128, His-129, and Met-173. The disordered stretch occupies residues 203–226; it reads RGRPAKREDKSDEFVAQEDSCMSG.

Post-translationally, binds 1 heme group per subunit.

The protein resides in the periplasm. The sequence is that of Cytochrome c-553I (cycB) from Paracoccus denitrificans.